The primary structure comprises 350 residues: Ferredoxin--NADP reductase (350 aa).

Residues Asp49, Gln57, Tyr62, Val102, Phe136, Asp303, and Thr344 each contribute to the FAD site.

Belongs to the ferredoxin--NADP reductase type 2 family. Homodimer. The cofactor is FAD.

The enzyme catalyses 2 reduced [2Fe-2S]-[ferredoxin] + NADP(+) + H(+) = 2 oxidized [2Fe-2S]-[ferredoxin] + NADPH. The protein is Ferredoxin--NADP reductase of Granulibacter bethesdensis (strain ATCC BAA-1260 / CGDNIH1).